Consider the following 674-residue polypeptide: DNA ligase (674 aa).

Residues 36 to 40, 85 to 86, and glutamate 116 contribute to the NAD(+) site; these read DSVYD and SL. The active-site N6-AMP-lysine intermediate is the lysine 118. NAD(+) contacts are provided by arginine 139, glutamate 176, lysine 292, and lysine 316. Residues cysteine 410, cysteine 413, cysteine 428, and cysteine 433 each contribute to the Zn(2+) site. The region spanning 596–674 is the BRCT domain; it reads PSSGNIAGKT…EADLLKFLTN (79 aa).

It belongs to the NAD-dependent DNA ligase family. LigA subfamily. Mg(2+) serves as cofactor. The cofactor is Mn(2+).

The catalysed reaction is NAD(+) + (deoxyribonucleotide)n-3'-hydroxyl + 5'-phospho-(deoxyribonucleotide)m = (deoxyribonucleotide)n+m + AMP + beta-nicotinamide D-nucleotide.. DNA ligase that catalyzes the formation of phosphodiester linkages between 5'-phosphoryl and 3'-hydroxyl groups in double-stranded DNA using NAD as a coenzyme and as the energy source for the reaction. It is essential for DNA replication and repair of damaged DNA. The polypeptide is DNA ligase (Rippkaea orientalis (strain PCC 8801 / RF-1) (Cyanothece sp. (strain PCC 8801))).